Consider the following 687-residue polypeptide: Adhesion G-protein coupled receptor G1 (687 aa).

Residues 1 to 25 (MAVQVLRQMVYFLLSLFSLVQGAHS) form the signal peptide. 26 to 33 (GSPREDFR) provides a ligand contact to heparin. At 26–402 (GSPREDFRFC…TEVEATHKHY (377 aa)) the chain is on the extracellular side. 2 cysteine pairs are disulfide-bonded: Cys35/Cys91 and Cys121/Cys177. 3 N-linked (GlcNAc...) asparagine glycosylation sites follow: Asn39, Asn148, and Asn171. Heparin is bound at residue 190-200 (LQHPQKAAKRP). The GAIN-B domain maps to 224–395 (DTLSFEEDRV…AVLMVSSTEV (172 aa)). N-linked (GlcNAc...) asparagine glycans are attached at residues Asn234, Asn303, Asn324, and Asn341. 2 cysteine pairs are disulfide-bonded: Cys346–Cys377 and Cys366–Cys379. The GPS stretch occupies residues 346–395 (CVFWVEDPASSSTGSWSSAGCETVSRDTQTSCLCNHLTYFAVLMVSSTEV). Positions 384–397 (YFAVLMVSSTEVEA) are stachel. A helical transmembrane segment spans residues 403-423 (LTLLSYVGCVISALACVFTIA). The Cytoplasmic portion of the chain corresponds to 424–442 (AYLCSRRKSRDYTIKVHMN). A helical membrane pass occupies residues 443–463 (LLSAVFLLDVSFLLSEPVALT). At 464–471 (GSEAACRT) the chain is on the extracellular side. The chain crosses the membrane as a helical span at residues 472–492 (SAMFLHFSLLACLSWMGLEGY). The Cytoplasmic segment spans residues 493–512 (NLYRLVVEVFGTYVPGYLLK). The helical transmembrane segment at 513–533 (LSIVGWGFPVFLVTLVALVDV) threads the bilayer. Residues 534-570 (NNYGPIILAVRRTPERVTYPSMCWIRDSLVSYVTNLG) are Extracellular-facing. A helical membrane pass occupies residues 571–591 (LFSLVFLFNLAMLATMVVQIL). Over 592-603 (RLRPHSQNWPHV) the chain is Cytoplasmic. A helical transmembrane segment spans residues 604–624 (LTLLGLSLVLGLPWALVFFSF). Residues 625–630 (ASGTFQ) are Extracellular-facing. Residues 631–651 (LVILYLFSIITSFQGFLIFLW) traverse the membrane as a helical segment. Residues 652–687 (YWSMRFQAQGGPSPLKNNSDSAKLPISSGSTSSSRI) lie on the Cytoplasmic side of the membrane. Residues 664–687 (SPLKNNSDSAKLPISSGSTSSSRI) are disordered. Residues 678 to 687 (SSGSTSSSRI) show a composition bias toward low complexity.

Belongs to the G-protein coupled receptor 2 family. LN-TM7 subfamily. Heterodimer of 2 chains generated by proteolytic processing; the large extracellular N-terminal fragment (ADGRG1 NT) and the membrane-bound C-terminal fragment (ADGRG1-CT) predominantly remain associated and non-covalently linked. ADGRG1 NT self-associates in a trans-trans manner; the homophilic interaction enhances receptor signaling. Interacts with TGM2. Interacts with heparin; leading to the reduction of ADGRG1 shedding. Interacts with COL3A1. Part of a GPCR-tetraspanin complex at least consisting of ADGRG1, CD81, eventually CD9, and GNA11 in which CD81 is enhancing the association of ADGRG1 with GNA11. In terms of processing, autoproteolytically cleaved into 2 fragments; the large extracellular N-terminal fragment and the membroune-bound C-terminal fragment predominantly remain associated and non-covalently linked. N-glycosylated. The secreted ADGRG1 N-terminal fragment is heavily glycosylated. Post-translationally, ubiquitinated. Undergoes polyubiquitination upon activation. As to expression, expressed in neural progenitor cells in fetal forbrain. Expressed in migrating neurons. Expressed in radial glial endfeet (at protein level). Expressed in peritubular myoid cells, Sertoli cells, and germ cells of the testis.

The protein localises to the cell membrane. It is found in the secreted. It localises to the membrane raft. With respect to regulation, forms a heterodimer of 2 chains generated by proteolytic processing that remain associated through non-covalent interactions mediated by the GAIN-B domain. In the inactivated receptor, the Stachel sequence (also named stalk) is embedded in the GAIN-B domain, where it adopts a beta-strand conformation. On activation, the Stachel moves into the 7 transmembrane region and adopts a twisted hook-shaped configuration that forms contacts within the receptor, leading to coupling of a G-alpha protein, which activates signaling. The cleaved GAIN-B and N-terminal domains can then dissociate from the rest of the receptor. Activated by the small-molecule agonist, 3-alpha-acetoxydihydrodeoxygedunin (3-alpha-DOG). Its function is as follows. Adhesion G-protein coupled receptor (aGPCR) for steroid hormone 17alpha-hydroxypregnenolone (17-OH), which is involved in cell adhesion and cell-cell interactions. Ligand binding causes a conformation change that triggers signaling via guanine nucleotide-binding proteins (G proteins) and modulates the activity of downstream effectors, such as RhoA pathway. ADGRG1 is coupled to G(12) and/or G(13) G proteins (GNA12 and GNA13, respectively) and mediates the activation Rho small GTPases. Acts as a potent suppressor of ferroptosis: binding to 17-OH-binding initiates signaling that down-regulates CD36 and alleviates ferroptosis-induced liver injury. Ligand-binding also induces cell adhesion activity via association with proteins such as collagen III/COL3A1 and TGM2. Mediates cell matrix adhesion in developing neurons and hematopoietic stem cells. Involved in cortical development, specifically in maintenance of the pial basement membrane integrity and in cortical lamination: association with COL3A1 in the developing brain inhibits neuronal migration via activation of the RhoA pathway. Together with TGM2, acts as a regulator of myelination and myelin repair in oligodendrocyte precursor cells. Acts as a hemostatic sensor of shear force: G protein-coupled receptor signaling is activated in response to shear force in platelets, promoting G(13) G protein signaling, and platelet shape change and aggregation in a COL3A1-dependent manner. Acts as an inhibitor of VEGFA production thereby inhibiting angiogenesis through a signaling pathway mediated by PRKCA. Plays a role in the maintenance of hematopoietic stem cells in bone marrow niche. Plays an essential role in testis development. Adhesion G-protein coupled receptor (aGPCR) for phosphatidylserine, which is involved in microglia-mediated synapse pruning during development. Required to maintain appropriate synaptic numbers in several brain regions in a time- and circuit-dependent fashion: phosphatidylserine-binding acts as a 'eat-me' signal for apoptotic cells, leading to microglial engulfment of phosphatidylserine-positive synapses. This Mus musculus (Mouse) protein is Adhesion G-protein coupled receptor G1.